The primary structure comprises 1222 residues: Chitin synthase 4 (1222 aa).

Positions 1-108 (MSLPERPGGI…NRIDKDHPNY (108 aa)) are disordered. Residues 51–68 (LSANSFAETIPSPNNSFV) are compositionally biased toward polar residues. Asn-64 is a glycosylation site (N-linked (GlcNAc...) asparagine). Residues 94–107 (IRPERNRIDKDHPN) show a composition bias toward basic and acidic residues. Asn-116 carries N-linked (GlcNAc...) asparagine glycosylation. The segment at 136 to 199 (TTDVSGSRSQ…KSTKKRSTPQ (64 aa)) is disordered. A compositionally biased stretch (polar residues) spans 137–154 (TDVSGSRSQTLDGVSDTS). Residues 176 to 196 (SAKRVSRHKSGKITKSTKKRS) show a composition bias toward basic residues. The next 2 membrane-spanning stretches (helical) occupy residues 204–224 (PPSF…DFML) and 242–262 (MGLI…TFGF). N-linked (GlcNAc...) asparagine glycans are attached at residues Asn-378 and Asn-418. The helical transmembrane segment at 509 to 529 (YVFLALILSVVGSRFVLALIF) threads the bilayer. The interval 595–662 (RFSTVYGPDR…PPSDGPGPAG (68 aa)) is disordered. Residues 608–643 (NKRVPTTMASSGGSGSQLLHPNSMYRQGNDSRSSFL) show a composition bias toward polar residues. Residues Asn-636 and Asn-1031 are each glycosylated (N-linked (GlcNAc...) asparagine). Helical transmembrane passes span 1056–1076 (FIVF…AFTF), 1090–1110 (VIPL…IVIT), and 1116–1136 (YLVW…VLPV). Residues 1201–1222 (GGGNSWSMPPGHQYHDDYYSDA) form a disordered region. Residues 1213-1222 (QYHDDYYSDA) are compositionally biased toward basic and acidic residues.

It belongs to the chitin synthase family. Class IV subfamily.

The protein localises to the cell membrane. It carries out the reaction [(1-&gt;4)-N-acetyl-beta-D-glucosaminyl](n) + UDP-N-acetyl-alpha-D-glucosamine = [(1-&gt;4)-N-acetyl-beta-D-glucosaminyl](n+1) + UDP + H(+). Polymerizes chitin, a structural polymer of the cell wall and septum, by transferring the sugar moiety of UDP-GlcNAc to the non-reducing end of the growing chitin polymer. Plays a role in cell wall integrity and is involved in tolerance to hyperosmotic conditions. Required to successfully penetrate the host plants and thus plays a key role in pathogenicity. This chain is Chitin synthase 4, found in Verticillium dahliae (strain VdLs.17 / ATCC MYA-4575 / FGSC 10137) (Verticillium wilt).